The chain runs to 255 residues: Chlorocatechol 1,2-dioxygenase (255 aa).

Fe cation-binding residues include Tyr130, Tyr164, His188, and His190.

The protein belongs to the intradiol ring-cleavage dioxygenase family. Fe(3+) serves as cofactor.

It carries out the reaction 3,5-dichlorocatechol + O2 = (2E,4E)-2,4-dichloromuconate + 2 H(+). It participates in aromatic compound metabolism; 3-chlorocatechol degradation. In terms of biological role, preferentially converts 3,5-dichlorocatechol as opposed to other chlorinated catechols. Retains diminished activity toward non-chlorinated substrates. The sequence is that of Chlorocatechol 1,2-dioxygenase (tfdC) from Burkholderia cepacia (Pseudomonas cepacia).